The chain runs to 243 residues: MLIIAGLGNPGGKYAGNRHNIGFMAVDAIHRRHGFSPWSKKFRAEIAEGEVGGEKVLLMKPQTFMNLSGESVGEAMRFYKLQPADLVAIYDELDLPQGKARLKTGGGHNGHNGIKSLDAHCGREYRRLRLGIGHPGIKDMVQNHVLGDFAKADKAWLEPLLDTLADNADMLVRNEDSQLMNKIALALGGKAEEEKPAKEMKDAGKKPASQSHIHQARNHNQPKLPATGPMADMLKKMFGKKGD.

Tyr-14 contacts tRNA. His-19 acts as the Proton acceptor in catalysis. Residues Phe-64, Asn-66, and Asn-112 each coordinate tRNA. The span at 190-205 (KAEEEKPAKEMKDAGK) shows a compositional bias: basic and acidic residues. The interval 190–243 (KAEEEKPAKEMKDAGKKPASQSHIHQARNHNQPKLPATGPMADMLKKMFGKKGD) is disordered. Over residues 208–221 (ASQSHIHQARNHNQ) the composition is skewed to polar residues.

The protein belongs to the PTH family. In terms of assembly, monomer.

The protein resides in the cytoplasm. The enzyme catalyses an N-acyl-L-alpha-aminoacyl-tRNA + H2O = an N-acyl-L-amino acid + a tRNA + H(+). Functionally, hydrolyzes ribosome-free peptidyl-tRNAs (with 1 or more amino acids incorporated), which drop off the ribosome during protein synthesis, or as a result of ribosome stalling. In terms of biological role, catalyzes the release of premature peptidyl moieties from peptidyl-tRNA molecules trapped in stalled 50S ribosomal subunits, and thus maintains levels of free tRNAs and 50S ribosomes. In Rhizobium johnstonii (strain DSM 114642 / LMG 32736 / 3841) (Rhizobium leguminosarum bv. viciae), this protein is Peptidyl-tRNA hydrolase.